Consider the following 79-residue polypeptide: Scutellin-5 (79 aa).

A signal peptide spans 1–24 (MSSGGLLLLLGLLTLWEVLTPVSS). One can recognise a BPTI/Kunitz inhibitor domain in the interval 31–79 (YELPADIGPCEDFTGAFHYSPREHEYIEFIYGGCEGNANNFNTLEECET). Residues C40 and C64 are joined by a disulfide bond.

The protein resides in the secreted. Its function is as follows. Serine protease inhibitor. The sequence is that of Scutellin-5 from Oxyuranus scutellatus scutellatus (Australian taipan).